Consider the following 736-residue polypeptide: MAGSSAGGGGVGETKVIYHLDEEETPYLVKIPVPAERITLGDFKSVLQRPAGAKYFFKSMDQDFGVVKEEISDDNARLPCFNGRVVSWLVSSDTPQPEVAPPAHESRTELVPPPPPLPPLPPERTSGIGDSRPPSFHPNVSSSHENLEPETETESVVSLRRDRPRRRDSSEHGAGGHRPGGPSRLERHLAGYESSSTLMTSELESTSLGDSDEDDTMSRFSSSTEQSSASRLLKRHRRRRKQRPPRMERTSSFSSVTDSTMSLNIITVTLNMEKYNFLGISIVGQSNERGDGGIYIGSIMKGGAVAADGRIEPGDMLLQVNDMNFENMSNDDAVRVLRDIVHKPGPIVLTVAKCWDPSPQAYFTLPRNEPIQPIDPAAWVSHSAALTGAFPAYPGSSSMSTITSGSSLPDGCEGRGLSVHMDMASVTKAMAAPESGLEVRDRMWLKITIPNAFLGSDVVDWLYHHVEGFPERREARKYASGLLKAGLIRHTVNKITFSEQCYYVFGDLSGGCESYLVNLSLNDNDGSSGASDQDTLAPLPGATPWPLLPTFSYQYPAPHPYSPQPPPYHELSSYTYGGGSASSQHSEGSRSSGSTRSDGGAGRTGRPEERAPESKSGSGSESELSSRGGSLRRGGEPGGTGDGGPPPSRGSTGAPPNLRALPGLHPYGAPSGMALPYNPMMVVMMPPPPPPVSTAVQPPGAPPVRDLGSVPPELTASRQSFHMAMGNPSEFFVDVM.

The DIX domain maps to 11–93 (VGETKVIYHL…RVVSWLVSSD (83 aa)). The tract at residues 93-255 (DTPQPEVAPP…RMERTSSFSS (163 aa)) is disordered. Positions 111–122 (VPPPPPLPPLPP) are enriched in pro residues. The segment covering 159-171 (LRRDRPRRRDSSE) has biased composition (basic and acidic residues). The span at 193–208 (ESSSTLMTSELESTSL) shows a compositional bias: low complexity. Serine 211 carries the phosphoserine modification. Positions 218-230 (SRFSSSTEQSSAS) are enriched in polar residues. The segment covering 232-244 (LLKRHRRRRKQRP) has biased composition (basic residues). The PDZ domain maps to 267–339 (TVTLNMEKYN…NDDAVRVLRD (73 aa)). Positions 433–507 (PESGLEVRDR…SEQCYYVFGD (75 aa)) constitute a DEP domain. Residues 558–568 (PHPYSPQPPPY) show a composition bias toward pro residues. Residues 558 to 665 (PHPYSPQPPP…PNLRALPGLH (108 aa)) are disordered. Composition is skewed to low complexity over residues 581–598 (ASSQ…TRSD) and 614–629 (SKSG…SRGG).

The protein belongs to the DSH family. In terms of assembly, interacts through its PDZ domain with the C-terminal regions of VANGL1 and VANGL2. Interacts with Rac. Interacts with ARRB1; the interaction is enhanced by phosphorylation of DVL1. Can form large oligomers (via DIX domain). Interacts (via DIX domain) with DIXDC1 (via DIX domain). Interacts (via DEP domain) with AP2M1 and the AP-2 complex. Interacts with FAM105B/otulin. Interacts with DCDC2. Interacts (when phosphorylated) with FOXK1 and FOXK2; the interaction induces DVL2 nuclear translocation. Interacts with MAPK15. Interacts with PKD1 (via extracellular domain). Interacts with LMBR1L. Post-translationally, phosphorylated by CSNK1D. WNT3A induces DVL2 phosphorylation by CSNK1E and MARK kinases. In terms of processing, ubiquitinated via 'Lys-63'-linked polyubiquitin chains; leading to its autophagy-mediated degradation. Ubiquitous.

It is found in the cell membrane. It localises to the cytoplasm. Its subcellular location is the cytosol. The protein localises to the cytoplasmic vesicle. The protein resides in the nucleus. In terms of biological role, plays a role in the signal transduction pathways mediated by multiple Wnt genes. Participates both in canonical and non-canonical Wnt signaling by binding to the cytoplasmic C-terminus of frizzled family members and transducing the Wnt signal to down-stream effectors. Promotes internalization and degradation of frizzled proteins upon Wnt signaling. This chain is Segment polarity protein dishevelled homolog DVL-2 (Dvl2), found in Mus musculus (Mouse).